The chain runs to 637 residues: Chaperone protein DnaK (637 aa).

Thr198 carries the phosphothreonine; by autocatalysis modification. The tract at residues 600–637 (IAQQQAQAQQAQGADAGAQSKDDDVVDAEFEEVKDDKK) is disordered. The segment covering 601–618 (AQQQAQAQQAQGADAGAQ) has biased composition (low complexity). A compositionally biased stretch (acidic residues) spans 623-637 (DVVDAEFEEVKDDKK).

This sequence belongs to the heat shock protein 70 family.

In terms of biological role, acts as a chaperone. This Vibrio parahaemolyticus serotype O3:K6 (strain RIMD 2210633) protein is Chaperone protein DnaK.